Here is a 444-residue protein sequence, read N- to C-terminus: Homogentisate 1,2-dioxygenase (444 aa).

The tract at residues 92–111 (GDSADVPPTPPNQLRWDPLP) is disordered. Histidine 298 (proton acceptor) is an active-site residue. 2 residues coordinate Fe cation: histidine 341 and glutamate 347. The homogentisate site is built by tyrosine 356 and histidine 377. Histidine 377 is a binding site for Fe cation.

The protein belongs to the homogentisate dioxygenase family. Hexamer; dimer of trimers. It depends on Fe cation as a cofactor.

It carries out the reaction homogentisate + O2 = 4-maleylacetoacetate + H(+). It functions in the pathway amino-acid degradation; L-phenylalanine degradation; acetoacetate and fumarate from L-phenylalanine: step 4/6. Its function is as follows. Involved in the catabolism of homogentisate (2,5-dihydroxyphenylacetate or 2,5-OH-PhAc), a central intermediate in the degradation of phenylalanine and tyrosine. Catalyzes the oxidative ring cleavage of the aromatic ring of homogentisate to yield maleylacetoacetate. This Burkholderia vietnamiensis (strain G4 / LMG 22486) (Burkholderia cepacia (strain R1808)) protein is Homogentisate 1,2-dioxygenase.